A 329-amino-acid chain; its full sequence is Short-chain dehydrogenase/reductase tropG (329 aa).

K57, D86, N113, Y203, and K207 together coordinate NADP(+). Y203 acts as the Proton acceptor in catalysis. The active-site Lowers pKa of active site Tyr is K207.

It belongs to the short-chain dehydrogenases/reductases (SDR) family.

The protein operates within secondary metabolite biosynthesis. Its function is as follows. Short-chain dehydrogenase/reductase; part of the gene cluster that mediates the biosynthesis of the tropolone class of fungal maleic anhydrides. The pathway begins with the synthesis of 3-methylorcinaldehyde by the non-reducing polyketide synthase (PKS) tropA. 3-methylorcinaldehyde is the substrate for the FAD-dependent monooxygenase tropB to yield a dearomatized hydroxycyclohexadione. The 2-oxoglutarate-dependent dioxygenase tropC then performs the oxidative ring expansion to provide the first tropolone metabolite stipitaldehyde. Trop D converts stipitaldehyde into stipitacetal which is in turn converted to stipitalide by the short-chain dehydrogenase/reductase tropE. The next steps involve tropF, tropG, tropH, tropI and tropJ to form successive tropolone maleic anhydrides including stipitaldehydic, stipitatonic and stipitatic acids. This is Short-chain dehydrogenase/reductase tropG from Talaromyces stipitatus (strain ATCC 10500 / CBS 375.48 / QM 6759 / NRRL 1006) (Penicillium stipitatum).